Here is a 62-residue protein sequence, read N- to C-terminus: Insect toxin BsIT4 (62 aa).

In terms of domain architecture, LCN-type CS-alpha/beta spans 1 to 62 (DGYIKGNKGC…WLYAATNTCG (62 aa)). 4 disulfides stabilise this stretch: cysteine 10–cysteine 61, cysteine 14–cysteine 35, cysteine 21–cysteine 42, and cysteine 25–cysteine 44.

The protein belongs to the long (4 C-C) scorpion toxin superfamily. Sodium channel inhibitor family. Beta subfamily. In terms of tissue distribution, expressed by the venom gland.

It localises to the secreted. Functionally, depressant insect beta-toxins cause a transient contraction paralysis followed by a slow flaccid paralysis. They bind voltage-independently at site-4 of sodium channels (Nav) and shift the voltage of activation toward more negative potentials thereby affecting sodium channel activation and promoting spontaneous and repetitive firing. This toxin is active only on insects. This Hottentotta tamulus sindicus (Scorpion) protein is Insect toxin BsIT4.